The primary structure comprises 712 residues: Matrix metalloproteinase-9 (712 aa).

The N-terminal stretch at 1-19 (MSPLQPLVLALLVLACCSA) is a signal peptide. Residues 20 to 106 (VPRRRQPTVV…PRCGVPDVGR (87 aa)) constitute a propeptide, activation peptide. N-linked (GlcNAc...) asparagine glycosylation occurs at N38. A Cysteine switch motif is present at residues 97-104 (PRCGVPDV). Residue C99 coordinates Zn(2+). N120 and N127 each carry an N-linked (GlcNAc...) asparagine glycan. The Ca(2+) site is built by D131 and D165. Residues H175 and D177 each contribute to the Zn(2+) site. Residues D182, G183, N185, and L187 each coordinate Ca(2+). Residue H190 participates in Zn(2+) binding. Ca(2+)-binding residues include G197, Q199, and D201. H203 is a Zn(2+) binding site. Ca(2+) contacts are provided by D205, D206, and E208. Fibronectin type-II domains are found at residues 225–273 (AKGA…FCPS), 283–331 (ADGK…FCPT), and 342–390 (AAGE…FCPD). Cystine bridges form between C230/C256, C244/C271, C288/C314, C302/C329, C347/C373, and C361/C388. H401 contacts Zn(2+). E402 is a catalytic residue. H405 and H411 together coordinate Zn(2+). A disordered region spans residues 440-519 (QHLYGPRPEP…PTESPDPAED (80 aa)). The segment covering 455-465 (TTTTTTTTEPQ) has biased composition (low complexity). Positions 491-504 (TGPPAAGPTGPPTA) are enriched in pro residues. Low complexity predominate over residues 505-514 (GPSAAPTESP). A disulfide bridge connects residues C521 and C709. Hemopexin repeat units follow at residues 523–568 (VDIF…WPAL), 569–613 (PRKL…GLGP), 615–662 (VAQV…FPGV), and 663–709 (PIST…LLKC).

The protein belongs to the peptidase M10A family. As to quaternary structure, exists as monomer or homodimer; disulfide-linked. Also exists as heterodimer with LCN2. Macrophages and transformed cell lines produce only the monomeric form. Interacts with ECM1. Zn(2+) serves as cofactor. The cofactor is Ca(2+). In terms of processing, N- and O-glycosylated.

It localises to the secreted. The protein resides in the extracellular space. It is found in the extracellular matrix. The enzyme catalyses Cleavage of gelatin types I and V and collagen types IV and V.. In terms of biological role, matrix metalloproteinase that plays an essential role in local proteolysis of the extracellular matrix and in leukocyte migration. Could play a role in bone osteoclastic resorption. Cleaves KiSS1 at a Gly-|-Leu bond. Cleaves NINJ1 to generate the Secreted ninjurin-1 form. Cleaves type IV and type V collagen into large C-terminal three quarter fragments and shorter N-terminal one quarter fragments. Degrades fibronectin but not laminin or Pz-peptide. In Bos taurus (Bovine), this protein is Matrix metalloproteinase-9.